The following is a 174-amino-acid chain: von Hippel-Lindau tumor suppressor homolog (174 aa).

This sequence belongs to the VHL family. In terms of assembly, interacts with hif-1 (hydroxylated on 'Pro-621'); the interaction induces hif-1 degradation. May be a component of the cullin E3 ubiquitin ligase complex.

It functions in the pathway protein modification; protein ubiquitination. Functionally, involved in the response to variation in environmental oxygen levels by targeting the hypoxia-inducible transcription factor hif-1 for proteasomal degradation when oxygen levels are normal (around 20%). By regulating hif-1 expression, plays a role in iron homeostasis, aging, heat acclimation and progeny size. Mediates resistance to enteropathogenic E.coli. Mediates susceptibility to B.thuringiensis pore-forming toxins. Not involved in P.aeruginosa susceptibility. This is von Hippel-Lindau tumor suppressor homolog from Caenorhabditis elegans.